The sequence spans 57 residues: Peptide BmKa1 (57 aa).

The first 22 residues, 1-22 (MKPRVFFLLFLLVAAMIETGES), serve as a signal peptide directing secretion. Composition is skewed to acidic residues over residues 20 to 29 (GESEENEEGS) and 45 to 57 (VDNE…GDSD). Positions 20 to 57 (GESEENEEGSNESGKSTEAKNTDASVDNEDSDIDGDSD) are disordered.

The protein belongs to the non-disulfide-bridged peptide (NDBP) superfamily. As to expression, expressed by the venom gland.

The protein resides in the secreted. In Olivierus martensii (Manchurian scorpion), this protein is Peptide BmKa1.